The following is a 57-amino-acid chain: Alpha-conotoxin-like Sm1.2 (57 aa).

The N-terminal stretch at 1–16 is a signal peptide; it reads MFTVFLLVVLATTVVS. Positions 17–42 are excised as a propeptide; the sequence is FPSDRESDGANDEARTDEPEEHGPDR. The segment at 17–46 is disordered; sequence FPSDRESDGANDEARTDEPEEHGPDRNGCC. Residues 19–41 are compositionally biased toward basic and acidic residues; sequence SDRESDGANDEARTDEPEEHGPD. 2 disulfide bridges follow: Cys45–Cys51 and Cys46–Cys56. A Cysteine amide modification is found at Cys56.

Belongs to the conotoxin A superfamily. In terms of tissue distribution, expressed by the venom duct.

The protein resides in the secreted. Functionally, alpha-conotoxins act on postsynaptic membranes, they bind to the nicotinic acetylcholine receptors (nAChR) and thus inhibit them. This chain is Alpha-conotoxin-like Sm1.2, found in Conus stercusmuscarum (Fly-specked cone).